Here is a 54-residue protein sequence, read N- to C-terminus: Large ribosomal subunit protein bL32c (54 aa).

The protein belongs to the bacterial ribosomal protein bL32 family.

The protein resides in the plastid. It is found in the chloroplast. The protein is Large ribosomal subunit protein bL32c of Helianthus annuus (Common sunflower).